A 1609-amino-acid chain; its full sequence is Factor-induced gene 2 protein (1609 aa).

The N-terminal stretch at M1–A22 is a signal peptide. N-linked (GlcNAc...) asparagine glycosylation occurs at N29. Disordered regions lie at residues S129–S165, S196–S243, and T266–V312. Residues Q137–F148 are compositionally biased toward polar residues. Over residues L150–S165 the composition is skewed to low complexity. Over residues S196–D212 the composition is skewed to polar residues. Low complexity-rich tracts occupy residues T213–S243 and T274–S285. A glycan (N-linked (GlcNAc...) asparagine) is linked at N231. Positions M286–V312 are enriched in polar residues. N298, N347, N386, N426, N495, N535, N661, N674, and N713 each carry an N-linked (GlcNAc...) asparagine glycan. The segment at A846–S876 is disordered. N-linked (GlcNAc...) asparagine glycosylation is found at N889, N907, and N1079. Over residues C1231 to A1243 the composition is skewed to polar residues. A disordered region spans residues C1231–S1259. Over residues S1244 to S1259 the composition is skewed to low complexity. A glycan (N-linked (GlcNAc...) asparagine) is linked at N1400. The GPI-anchor amidated glycine moiety is linked to residue G1588. Positions S1589–I1609 are cleaved as a propeptide — removed in mature form.

Post-translationally, N-glycosylated.

Its subcellular location is the secreted. It is found in the cell wall. It localises to the membrane. Its function is as follows. Required for efficient mating. Plays a role in maintenance of cell wall integrity during mating. Important for mating cell projection shape and conjugation bridge diameter. Plays a role in cell fusion and nuclear migration. This is Factor-induced gene 2 protein (FIG2) from Saccharomyces cerevisiae (strain ATCC 204508 / S288c) (Baker's yeast).